Consider the following 719-residue polypeptide: Putative RNA-binding protein involved in heterochromatin assembly (719 aa).

An RRM domain is found at 226-322 (KILYMNNLPP…NLANTKQPRV (97 aa)). A Phosphoserine modification is found at Ser345. Residues 355 to 384 (RPGDWNCPSCGFSNFQRRTACFRCSFPAPS) form a RanBP2-type 1 zinc finger. The interval 389–415 (HTANSNNNVNSSRNNLNNRVNSGSSSN) is disordered. The span at 392 to 415 (NSNNNVNSSRNNLNNRVNSGSSSN) shows a compositional bias: low complexity. Ser455 bears the Phosphoserine mark. A disordered region spans residues 511-561 (NNNINGNGNGNGNNSNNNNNHNNNHNNNHHNGSINSNSNTNNNNNNNNGNN). The RanBP2-type 2 zinc-finger motif lies at 581–610 (RAGDWKCSTCTYHNFAKNVVCLRCGGPKSI). The segment covering 622–649 (DSSTFGPASRTPSNNNISVNTNGGSNAG) has biased composition (polar residues). The interval 622-661 (DSSTFGPASRTPSNNNISVNTNGGSNAGRTDGNDNKGRDI) is disordered. At Ser630 the chain carries Phosphoserine. Residues 652 to 661 (DGNDNKGRDI) show a composition bias toward basic and acidic residues.

The protein localises to the chromosome. It is found in the nucleus. Its function is as follows. May play a role in chromatin organization. The sequence is that of Putative RNA-binding protein involved in heterochromatin assembly from Saccharomyces cerevisiae (strain ATCC 204508 / S288c) (Baker's yeast).